Here is a 459-residue protein sequence, read N- to C-terminus: MDLTAPLADTIAAIATAVVPEQGSIGIVRLSGSRALAIAQAIFTPARRNAVWESHRLLYGWIHDEKGRRLDEALAVWMQAPRSYTREDVVELHCHGGIMVVQATLQQCLRQGARLAQPGEFSLRAFLNGRIDLTQAESVADLVAARSPQAAQMALAGLQGKLGQSIRALRQELLGLLAEIEARLDFEEDLPPLDVPAWQARLQDIQAQMQALLATAERGQLLRTGVKVAIVGRPNVGKSSLLNAWSGQDRAIVTDLPGTTRDVVESQLVVRGIPVQLLDTAGIRATDDPVERLGVERSQRLAQTADVLVLVIDAQAGWTEADAAIYASIRHRPLILVINKTDLAPADKIRLPPEIAYRVPAVAAQGQGIPELEEALEQLVTQGRPQPNLEVSLNQRQAAALRQAQASLEQVVQAMQAQLPLDFWTIDLRGALHALGQITGEEISEAVLDQIFSRFCIGK.

Residues Arg-29, Glu-91, and Arg-130 each contribute to the (6S)-5-formyl-5,6,7,8-tetrahydrofolate site. In terms of domain architecture, TrmE-type G spans 225–381 (GVKVAIVGRP…LEEALEQLVT (157 aa)). Residue Asn-235 participates in K(+) binding. Residues 235 to 240 (NVGKSS), 254 to 260 (TDLPGTT), and 279 to 282 (DTAG) contribute to the GTP site. Ser-239 lines the Mg(2+) pocket. 3 residues coordinate K(+): Thr-254, Leu-256, and Thr-259. Mg(2+) is bound at residue Thr-260. Lys-459 lines the (6S)-5-formyl-5,6,7,8-tetrahydrofolate pocket.

It belongs to the TRAFAC class TrmE-Era-EngA-EngB-Septin-like GTPase superfamily. TrmE GTPase family. Homodimer. Heterotetramer of two MnmE and two MnmG subunits. The cofactor is K(+).

It is found in the cytoplasm. Its function is as follows. Exhibits a very high intrinsic GTPase hydrolysis rate. Involved in the addition of a carboxymethylaminomethyl (cmnm) group at the wobble position (U34) of certain tRNAs, forming tRNA-cmnm(5)s(2)U34. This Synechococcus sp. (strain JA-3-3Ab) (Cyanobacteria bacterium Yellowstone A-Prime) protein is tRNA modification GTPase MnmE.